The sequence spans 518 residues: Nicotine N-demethylase CYP82E3 (518 aa).

A helical transmembrane segment spans residues 2–22 (VFPVEAIVGLVTFTFLFYFLW). Residue K254 forms a Glycyl lysine isopeptide (Lys-Gly) (interchain with G-Cter in ubiquitin) linkage. Heme is bound at residue C458.

The protein belongs to the cytochrome P450 family. CYP82E2 subfamily. It depends on heme as a cofactor. Expressed in leaves.

It localises to the membrane. The catalysed reaction is (S)-nicotine + reduced [NADPH--hemoprotein reductase] + O2 = (S)-nornicotine + formaldehyde + oxidized [NADPH--hemoprotein reductase] + H2O + H(+). Its pathway is alkaloid biosynthesis; nicotine biosynthesis. Involved in the biosynthesis of pyridine alkaloid natural products, leading mainly to the production of anabasine, anatabine, nicotine and nornicotine, effective deterrents against herbivores with antiparasitic and pesticide properties (neurotoxins); nornicotine serves as the precursor in the synthesis of the carcinogen compound N'-nitrosonornicotine (NNN). Catalyzes the demethylation of nicotine to form nornicotine. The protein is Nicotine N-demethylase CYP82E3 of Nicotiana tomentosiformis (Tobacco).